Consider the following 407-residue polypeptide: Semenogelin-2 (407 aa).

The N-terminal stretch at 1-23 (MKSIILFVLSLVLILEKQAAVMG) is a signal peptide. Disordered stretches follow at residues 25–60 (KDGS…TKSK), 133–158 (GQAH…LSSQ), 173–192 (KEQA…GSQS), and 272–407 (NLNQ…NKIS). Composition is skewed to polar residues over residues 31 to 40 (QLPSGSSQFP), 137 to 158 (CGTQ…LSSQ), and 174 to 192 (EQAS…GSQS). Positions 292-310 (RTEERQLNHGEKSVQKDVS) are enriched in basic and acidic residues. The segment covering 325–334 (KSQNQVTIHS) has biased composition (polar residues). A compositionally biased stretch (basic and acidic residues) spans 335–345 (QDQEHGHKENK). Residues 372-397 (GSISIQTEEQIHGKSQNXVRIPSQAQ) show a composition bias toward polar residues.

It belongs to the semenogelin family. As to quaternary structure, interacts with SERPINA5.

It localises to the secreted. Its function is as follows. Participates in the formation of a gel matrix (sperm coagulum) entrapping the accessory gland secretions and ejaculated spermatozoa. In Pan troglodytes (Chimpanzee), this protein is Semenogelin-2 (SEMG2).